A 179-amino-acid chain; its full sequence is Large ribosomal subunit protein uL5 (179 aa).

The protein belongs to the universal ribosomal protein uL5 family. In terms of assembly, part of the 50S ribosomal subunit; part of the 5S rRNA/L5/L18/L25 subcomplex. Contacts the 5S rRNA and the P site tRNA. Forms a bridge to the 30S subunit in the 70S ribosome.

In terms of biological role, this is one of the proteins that bind and probably mediate the attachment of the 5S RNA into the large ribosomal subunit, where it forms part of the central protuberance. In the 70S ribosome it contacts protein S13 of the 30S subunit (bridge B1b), connecting the 2 subunits; this bridge is implicated in subunit movement. Contacts the P site tRNA; the 5S rRNA and some of its associated proteins might help stabilize positioning of ribosome-bound tRNAs. The sequence is that of Large ribosomal subunit protein uL5 from Shewanella denitrificans (strain OS217 / ATCC BAA-1090 / DSM 15013).